A 179-amino-acid chain; its full sequence is ATP-dependent protease subunit HslV (179 aa).

T7 is an active-site residue. 3 residues coordinate Na(+): G162, C165, and T168.

The protein belongs to the peptidase T1B family. HslV subfamily. A double ring-shaped homohexamer of HslV is capped on each side by a ring-shaped HslU homohexamer. The assembly of the HslU/HslV complex is dependent on binding of ATP.

It is found in the cytoplasm. It carries out the reaction ATP-dependent cleavage of peptide bonds with broad specificity.. With respect to regulation, allosterically activated by HslU binding. Functionally, protease subunit of a proteasome-like degradation complex believed to be a general protein degrading machinery. This Bordetella petrii (strain ATCC BAA-461 / DSM 12804 / CCUG 43448) protein is ATP-dependent protease subunit HslV.